The primary structure comprises 258 residues: HVA22-like protein j (258 aa).

Residues 153–258 (AANQPPTERN…RSNSRTQPAA (106 aa)) are disordered. The span at 156-169 (QPPTERNVNMNAQS) shows a compositional bias: polar residues. The segment covering 206 to 215 (WPPPTPPPTP) has biased composition (pro residues).

This sequence belongs to the DP1 family.

The chain is HVA22-like protein j (HVA22J) from Arabidopsis thaliana (Mouse-ear cress).